The primary structure comprises 196 residues: Agamous-like MADS-box protein AGL70 (196 aa).

Residues 1 to 61 enclose the MADS-box domain; the sequence is MGRRKVEIKR…GKLYDSASGD (61 aa). A Nuclear localization signal motif is present at residues 8-15; it reads IKRIENKS. The K-box domain occupies 80 to 170; it reads ALDLAEKIRN…ASQVGKKTFL (91 aa).

As to expression, mostly expressed in roots, leaves and flowers, and, to a lower extent, in inflorescence, siliques, pollen and shoots.

It localises to the nucleus. Its function is as follows. Probable transcription factor involved in the negative regulation of flowering time, probably through the photoperiodic and vernalization pathways; more efficient in cv. Landsberg erecta than in cv. Columbia background. Prevents premature flowering. Involved in the modulation of vernalization impact on flowering according to genotype acclimation to altitude. This Arabidopsis thaliana (Mouse-ear cress) protein is Agamous-like MADS-box protein AGL70.